Consider the following 110-residue polypeptide: MSVVIRLARAGTKKRPFYHVVVADSRFPRDGRFIERLGYFNPLMAKDNEARLKLDLDKVKDWLAKGAQPSDRVARFLDITGVKKREARNNPEKAVPRKERKAAAEAAAKK.

Positions 87 to 110 are disordered; sequence ARNNPEKAVPRKERKAAAEAAAKK.

It belongs to the bacterial ribosomal protein bS16 family.

This is Small ribosomal subunit protein bS16 from Rhodopseudomonas palustris (strain HaA2).